We begin with the raw amino-acid sequence, 186 residues long: Elongation factor P (186 aa).

This sequence belongs to the elongation factor P family.

The protein resides in the cytoplasm. Its pathway is protein biosynthesis; polypeptide chain elongation. Functionally, involved in peptide bond synthesis. Stimulates efficient translation and peptide-bond synthesis on native or reconstituted 70S ribosomes in vitro. Probably functions indirectly by altering the affinity of the ribosome for aminoacyl-tRNA, thus increasing their reactivity as acceptors for peptidyl transferase. This chain is Elongation factor P, found in Neisseria gonorrhoeae (strain ATCC 700825 / FA 1090).